The primary structure comprises 414 residues: F-box protein At3g26010 (414 aa).

Residues 5-52 (NRTIHLTDAIWTEILARLPLRIIARFKSVSKTWKSTIESVYFRRLFVS) enclose the F-box domain.

In Arabidopsis thaliana (Mouse-ear cress), this protein is F-box protein At3g26010.